A 1081-amino-acid chain; its full sequence is Disheveled-associated activator of morphogenesis 1-A (1081 aa).

One can recognise a GBD/FH3 domain in the interval 45–418; the sequence is LPVPPVEELD…QIVIQNEKGQ (374 aa). Disordered stretches follow at residues 455 to 476 and 519 to 615; these read KEHNELQQKLEKKERECDAKTQ and RTVC…PLKS. A compositionally biased stretch (pro residues) spans 526 to 536; that stretch reads PGGPPPPPGAP. The segment covering 538-547 has biased composition (low complexity); that stretch reads GPMSMPSGNF. Pro residues predominate over residues 548-585; the sequence is MPPPPPPPPPFPGGMAPPPPPPPPPPPPPGGPPPPPGL. Residues 586–600 show a composition bias toward low complexity; sequence PLLGAAPPGAPLGLS. Residues 603-1012 form the FH2 domain; sequence KKNIPQPKNP…EERRIRMEAQ (410 aa). Positions 696–705 are actin-binding; that stretch reads AQNCNILLSR. Basic and acidic residues predominate over residues 1013-1029; it reads LKEQRERERKARKAKEN. Disordered stretches follow at residues 1013–1038 and 1060–1081; these read LKEQRERERKARKAKENGEEEGEFDD and RKRIVSQTTESSRERPVTKLNY. A DAD domain is found at 1030 to 1061; the sequence is GEEEGEFDDLVSALRSGEVFDKDLSKLKRNRK. Residues 1070 to 1081 show a composition bias toward basic and acidic residues; the sequence is SSRERPVTKLNY.

The protein resides in the cytoplasm. Its subcellular location is the cytoskeleton. It localises to the cilium basal body. Binds to disheveled (dsh) and Rho, and mediates Wnt-induced dsh-Rho complex formation during gastrulation. May play a role as a scaffolding protein to recruit Rho-GDP and Rho-GEF, thereby enhancing Rho-GTP formation. Can direct nucleation and elongation of new actin filaments. Involved in building functional cilia. Involved in building functional cilia. Involved in the organization of the subapical actin network in multiciliated epithelial cells. This chain is Disheveled-associated activator of morphogenesis 1-A (daam1-a), found in Xenopus laevis (African clawed frog).